Reading from the N-terminus, the 272-residue chain is 2-amino-3,7-dideoxy-D-threo-hept-6-ulosonate synthase (272 aa).

The Proton acceptor role is filled by Asp-33. Residues 33–37 and 153–155 contribute to the 1-deoxy-D-threo-hexo-2,5-diulose 6-phosphate site; these read DHGVS and YPR. Tyr-153 serves as the catalytic Proton donor. Lys-184 (schiff-base intermediate with substrate) is an active-site residue. Residues 209–210 and 237–238 contribute to the 1-deoxy-D-threo-hexo-2,5-diulose 6-phosphate site; these read GG and GR.

This sequence belongs to the DeoC/FbaB aldolase family. ADHS subfamily. As to quaternary structure, homodecamer.

It carries out the reaction 1-deoxy-D-threo-hexo-2,5-diulose 6-phosphate + L-aspartate 4-semialdehyde = 2,3-dioxopropyl phosphate + 2-amino-2,3,7-trideoxy-D-lyxo-hept-6-ulosonate. Functionally, catalyzes a transaldol reaction between 6-deoxy-5-ketofructose 1-phosphate (DKFP) and L-aspartate semialdehyde (ASA) with an elimination of hydroxypyruvaldehyde phosphate to yield 2-amino-3,7-dideoxy-D-threo-hept-6-ulosonate (ADH). Plays a key role in an alternative pathway of the biosynthesis of 3-dehydroquinate (DHQ), which is involved in the canonical pathway for the biosynthesis of aromatic amino acids. The polypeptide is 2-amino-3,7-dideoxy-D-threo-hept-6-ulosonate synthase (Methanococcus vannielii (strain ATCC 35089 / DSM 1224 / JCM 13029 / OCM 148 / SB)).